A 226-amino-acid chain; its full sequence is MKLLFLCALIALTAAAPRQKRLTVGTIAVSGGAGGSTGCVVTGNVLYANGFKLRELTPIEQQELQDYQNKVADYKATLKQAVKERQEKLKARLAGKKGKAVETSSEELPKAPKKPSFCSPDDTTQFYFDGCMVQNNRVYVGNTYARDLTPSEIEELKVFEKKQTVYQDYIQKQVQQQVSNLFGSSDFFSSFFGGGEAKQTTTTEAPELPEEAPEQPNVPNFCTPIY.

Positions 1 to 15 are cleaved as a signal peptide; it reads MKLLFLCALIALTAA. 2 disordered regions span residues 95–116 and 196–218; these read GKKG…KKPS and EAKQ…QPNV. Cys131 and Cys222 are disulfide-bonded.

Belongs to the protease inhibitor I33 family.

The protein resides in the secreted. Its function is as follows. Aspartyl protease inhibitor. This Parelaphostrongylus tenuis (Meningeal worm) protein is Aspartyl protease inhibitor.